We begin with the raw amino-acid sequence, 216 residues long: UPF0193 protein EVG1 homolog (216 aa).

Belongs to the UPF0193 (EVG1) family.

In Mus musculus (Mouse), this protein is UPF0193 protein EVG1 homolog.